Consider the following 227-residue polypeptide: MQKNNLKNLITTIVTNAFFNQKANFSIPLKGVIGEKRPSILIGNININFKSDSLIEVSFPYYPLLNKNYPNPSIISNIIQKALSNHLLYSSKNYSFIVNIRALPISTPYGSSLIFSKYIAIIIGSNPKIASTLWIDPKRFINLPKLQSDSIFKILGLNVPKGWKGIHISLNLIKWNSLSSRGRITNIIKGSVPLTNNSNGYDESSLAIYSKMGTIQIKVRLSYSSNL.

The protein belongs to the universal ribosomal protein uS3 family. Component of the mitochondrial small ribosomal subunit (mt-SSU). Mature yeast 74S mitochondrial ribosomes consist of a small (37S) and a large (54S) subunit. The 37S small subunit contains a 15S ribosomal RNA (15S mt-rRNA) and at least 32 different proteins. The 54S large subunit contains a 21S rRNA (21S mt-rRNA) and at least 45 different proteins. uS3m, uS4m and uS5m form the narrow entry site of the mRNA channel.

The protein localises to the mitochondrion. Functionally, essential for mitochondrial protein synthesis and required for the maturation of small ribosomal subunits. Component of the mitochondrial ribosome (mitoribosome), a dedicated translation machinery responsible for the synthesis of mitochondrial genome-encoded proteins, including at least some of the essential transmembrane subunits of the mitochondrial respiratory chain. The mitoribosomes are attached to the mitochondrial inner membrane and translation products are cotranslationally integrated into the membrane. uS3m is essential for mitochondrial protein synthesis and required for the maturation of small ribosomal subunits. The sequence is that of Small ribosomal subunit protein uS3m (var1) from Schizosaccharomyces pombe (strain 972 / ATCC 24843) (Fission yeast).